The chain runs to 292 residues: Elongation factor Ts (292 aa).

The interval 79-82 is involved in Mg(2+) ion dislocation from EF-Tu; it reads TDFV.

This sequence belongs to the EF-Ts family.

The protein resides in the cytoplasm. Functionally, associates with the EF-Tu.GDP complex and induces the exchange of GDP to GTP. It remains bound to the aminoacyl-tRNA.EF-Tu.GTP complex up to the GTP hydrolysis stage on the ribosome. This is Elongation factor Ts from Xanthomonas axonopodis pv. citri (strain 306).